A 182-amino-acid chain; its full sequence is Large ribosomal subunit protein uL6 (182 aa).

It belongs to the universal ribosomal protein uL6 family. In terms of assembly, part of the 50S ribosomal subunit.

Its function is as follows. This protein binds to the 23S rRNA, and is important in its secondary structure. It is located near the subunit interface in the base of the L7/L12 stalk, and near the tRNA binding site of the peptidyltransferase center. This chain is Large ribosomal subunit protein uL6, found in Nostoc sp. (strain PCC 7120 / SAG 25.82 / UTEX 2576).